The chain runs to 79 residues: Acyl carrier protein (79 aa).

Positions 2–77 (SEIGERVKKI…DAVKFLEKNA (76 aa)) constitute a Carrier domain. Residue Ser37 is modified to O-(pantetheine 4'-phosphoryl)serine.

Belongs to the acyl carrier protein (ACP) family. Post-translationally, 4'-phosphopantetheine is transferred from CoA to a specific serine of apo-ACP by AcpS. This modification is essential for activity because fatty acids are bound in thioester linkage to the sulfhydryl of the prosthetic group.

The protein localises to the cytoplasm. It functions in the pathway lipid metabolism; fatty acid biosynthesis. Carrier of the growing fatty acid chain in fatty acid biosynthesis. The protein is Acyl carrier protein of Rhodopseudomonas palustris (strain BisA53).